The sequence spans 258 residues: Peptidase inhibitor 15 (258 aa).

Residues Met1 to Thr21 form the signal peptide. Positions Val22–Arg60 are excised as a propeptide. N-linked (GlcNAc...) asparagine glycans are attached at residues Asn36 and Asn124. The 141-residue stretch at Leu71–Tyr211 folds into the SCP domain.

The protein belongs to the CRISP family. In terms of processing, N-glycosylated. Weakly expressed. Expressed at low level in prostate, mammary gland, salivary gland and thyroid gland.

It is found in the secreted. Serine protease inhibitor which displays weak inhibitory activity against trypsin. May play a role in facial patterning during embryonic development. In Mus musculus (Mouse), this protein is Peptidase inhibitor 15 (Pi15).